Reading from the N-terminus, the 1276-residue chain is Sterol regulatory element-binding protein cleavage-activating protein (1276 aa).

Residues 1–18 are Cytoplasmic-facing; that stretch reads MTLTERLREKISQAFYNH. A helical transmembrane segment spans residues 19 to 39; that stretch reads GLLCASYPIPIILFTGLCILA. The Lumenal portion of the chain corresponds to 40 to 279; it reads CCYPLLKLPL…NLVHVHFKEE (240 aa). The segment at 46-284 is loop-1; that stretch reads KLPLPGTGPV…HFKEEIGIAE (239 aa). The interval 60 to 81 is disordered; sequence PVKDYSPPPVDSDHKQGEPSEQ. Asparagine 263 carries an N-linked (GlcNAc...) asparagine glycan. A helical membrane pass occupies residues 280–300; that stretch reads IGIAELIPLVTTYIILFAYIY. The 159-residue stretch at 284 to 442 folds into the SSD domain; the sequence is ELIPLVTTYI…MFFFTTVLSI (159 aa). Residues 301–312 are Cytoplasmic-facing; the sequence is FSTRKIDMVKSK. The chain crosses the membrane as a helical span at residues 313 to 333; it reads WGLALAAVVTVLSSLLMSVGL. Over 334-344 the chain is Lumenal; the sequence is CTLFGLTPTLN. Residues 345 to 365 traverse the membrane as a helical segment; it reads GGEIFPYLVVVIGLENVLVLT. At 366–401 the chain is on the cytoplasmic side; that stretch reads KSVVSTPVDLEVKLRIAQGLSSESWSIMKNVATELG. The chain crosses the membrane as a helical span at residues 402-422; that stretch reads IILIGYFTLVPAIQEFCLFAV. A topological domain (lumenal) is located at residue valine 423. The chain crosses the membrane as a helical span at residues 424-444; the sequence is GLVSDFFLQMFFFTTVLSIDI. The Cytoplasmic segment spans residues 445–518; it reads RRMELADLNK…FLARTRLAQR (74 aa). An ER export signal motif is present at residues 447–452; it reads MELADL. Glycyl lysine isopeptide (Lys-Gly) (interchain with G-Cter in ubiquitin) cross-links involve residues lysine 454 and lysine 466. Residues 519–539 traverse the membrane as a helical segment; the sequence is LIMAGTVVWIGILVYTDPAGL. The tract at residues 535 to 710 is loop-7; the sequence is DPAGLRTYLA…QAHGDITLYK (176 aa). At 540-708 the chain is on the lumenal side; that stretch reads RTYLAAQVTE…GTQAHGDITL (169 aa). N-linked (GlcNAc...) asparagine glycosylation is found at asparagine 590 and asparagine 641. A helical transmembrane segment spans residues 709-729; it reads YKVAALGLAAGIVLVLLLLCL. Topologically, residues 730-1276 are cytoplasmic; that stretch reads YRVLCPRNYG…YVPSVLEKLD (547 aa). The interaction with SREBF2 stretch occupies residues 731–1276; sequence RVLCPRNYGQ…YVPSVLEKLD (546 aa). The stretch at 771–811 is one WD 1 repeat; the sequence is VLRGHLMDIECLASDGMLLVSCCLAGQVCVWDAQTGDCLTR. The interval 816 to 903 is disordered; that stretch reads GSRRDSCGGG…RHRAGCGRAR (88 aa). 6 positions are modified to phosphoserine: serine 821, serine 837, serine 843, serine 850, serine 905, and serine 934. A disordered region spans residues 928–957; the sequence is PALRPPSPGSPLPQASQEDGAAPEKGSPPL. 2 WD repeats span residues 949-999 and 1002-1039; these read APEK…LCCS and EVSS…SLSP. Position 1048 is an omega-N-methylarginine (arginine 1048). WD repeat units lie at residues 1074 to 1111, 1114 to 1152, 1155 to 1192, and 1194 to 1232; these read AHQK…CLFT, GHSG…RVSH, AHRG…KLYS, and QQDL…LLQT.

The protein belongs to the WD repeat SCAP family. As to quaternary structure, membrane region forms a homotetramer. Component of the SCAP-SREBP complex (composed of SCAP and SREBF1/SREBP1 or SREBF2/SREBP2); interacts with SREBF1/SREBP1 or SREBF2/SREBP2 through its C-terminal cytoplasmic domain. Forms a ternary complex with INSIG1 or INSIG2 through its transmembrane domains at high sterol concentrations. Interacts with PAQR3; the interaction anchors the SCAP-SREBP complex to the Golgi apparatus in low cholesterol conditions. Interacts with the SEC23-SEC24 complex in a SAR1-GTP-dependent manner through an ER export signal in its third cytoplasmic loop. Interacts with RNF139; the interaction inhibits the interaction of SCAP with SEC24B and hampering the ER to Golgi transport of the SCAP-SREBP complex. Interacts with SPRING. In terms of processing, ubiquitinated at Lys-454 and Lys-466. RNF145 triggers ubiquitination of SCAP, likely inhibiting SCAP-SREBP complex transport to the Golgi apparatus and the subsequent processing/maturation of SREBF2/SREBP2.

The protein localises to the endoplasmic reticulum membrane. It is found in the golgi apparatus membrane. The protein resides in the cytoplasmic vesicle. It localises to the COPII-coated vesicle membrane. Escort protein required for cholesterol as well as lipid homeostasis. Regulates export of the SCAP-SREBP complex from the endoplasmic reticulum to the Golgi upon low cholesterol, thereby regulating the processing of sterol regulatory element-binding proteins (SREBPs) SREBF1/SREBP1 and SREBF2/SREBP2. At high sterol concentrations, formation of a ternary complex with INSIG (INSIG1 or INSIG2) leads to mask the ER export signal in SCAP, promoting retention of the complex in the endoplasmic reticulum. Low sterol concentrations trigger release of INSIG, a conformational change in the SSD domain of SCAP, unmasking of the ER export signal, promoting recruitment into COPII-coated vesicles and transport of the SCAP-SREBP to the Golgi: in the Golgi, SREBPs are then processed, releasing the transcription factor fragment of SREBPs from the membrane, its import into the nucleus and up-regulation of LDLR, INSIG1 and the mevalonate pathway. Binds cholesterol via its SSD domain. The chain is Sterol regulatory element-binding protein cleavage-activating protein from Cricetulus griseus (Chinese hamster).